The primary structure comprises 501 residues: Glycerol kinase (501 aa).

T17 is an ADP binding site. Positions 17, 18, and 19 each coordinate ATP. T17 contributes to the sn-glycerol 3-phosphate binding site. R21 provides a ligand contact to ADP. Sn-glycerol 3-phosphate is bound by residues R87, E88, Y139, and D243. Positions 87, 88, 139, 243, and 244 each coordinate glycerol. Residues T265 and G308 each contribute to the ADP site. ATP is bound by residues T265, G308, Q312, and G409. Residues G409 and N413 each coordinate ADP.

It belongs to the FGGY kinase family.

The enzyme catalyses glycerol + ATP = sn-glycerol 3-phosphate + ADP + H(+). Its pathway is polyol metabolism; glycerol degradation via glycerol kinase pathway; sn-glycerol 3-phosphate from glycerol: step 1/1. With respect to regulation, inhibited by fructose 1,6-bisphosphate (FBP). Its function is as follows. Key enzyme in the regulation of glycerol uptake and metabolism. Catalyzes the phosphorylation of glycerol to yield sn-glycerol 3-phosphate. This is Glycerol kinase from Pseudomonas fluorescens (strain SBW25).